A 513-amino-acid chain; its full sequence is Probable histone deacetylase 19 (513 aa).

Residues 23 to 334 (RRVCYFYDPD…WCYETGVALG (312 aa)) form a histone deacetylase region. Histidine 154 functions as the Proton donor/acceptor in the catalytic mechanism. Residues aspartate 189, histidine 191, and aspartate 277 each coordinate Zn(2+). 2 disordered regions span residues 384 to 432 (HAPS…ESSR) and 446 to 513 (ENAT…YHKP). Residues 398-409 (EIPEQDEDQDDP) are compositionally biased toward acidic residues. The span at 410-432 (DERHDPDSDMEVDDHKAVEESSR) shows a compositional bias: basic and acidic residues. A compositionally biased stretch (polar residues) spans 492 to 504 (NVKNEPESSTKLQ).

This sequence belongs to the histone deacetylase family. HD type 1 subfamily. It depends on Zn(2+) as a cofactor.

Its subcellular location is the nucleus. The catalysed reaction is N(6)-acetyl-L-lysyl-[histone] + H2O = L-lysyl-[histone] + acetate. In terms of biological role, responsible for the deacetylation of lysine residues on the N-terminal part of the core histones (H2A, H2B, H3 and H4). Histone deacetylation gives a tag for epigenetic repression and plays an important role in transcriptional regulation, cell cycle progression and developmental events. Histone deacetylases act via the formation of large multiprotein complexes. This is Probable histone deacetylase 19 from Zea mays (Maize).